The following is a 237-amino-acid chain: Uridylate kinase (237 aa).

12–15 (KLSG) contributes to the ATP binding site. The tract at residues 20–25 (GAEGFG) is involved in allosteric activation by GTP. G54 is a binding site for UMP. ATP contacts are provided by G55 and R59. Residues D74 and 135 to 142 (TGSPFFTT) each bind UMP. Positions 162, 168, and 171 each coordinate ATP.

It belongs to the UMP kinase family. Homohexamer.

The protein localises to the cytoplasm. It catalyses the reaction UMP + ATP = UDP + ADP. It participates in pyrimidine metabolism; CTP biosynthesis via de novo pathway; UDP from UMP (UMPK route): step 1/1. Allosterically activated by GTP. Inhibited by UTP. In terms of biological role, catalyzes the reversible phosphorylation of UMP to UDP. The protein is Uridylate kinase of Actinobacillus succinogenes (strain ATCC 55618 / DSM 22257 / CCUG 43843 / 130Z).